Here is a 251-residue protein sequence, read N- to C-terminus: Diphthine synthase (251 aa).

S-adenosyl-L-methionine-binding positions include Leu9, Asp84, Val87, 112–113 (SI), Leu160, Ala194, and His219.

This sequence belongs to the diphthine synthase family. Homodimer.

The enzyme catalyses 2-[(3S)-amino-3-carboxypropyl]-L-histidyl-[translation elongation factor 2] + 3 S-adenosyl-L-methionine = diphthine-[translation elongation factor 2] + 3 S-adenosyl-L-homocysteine + 3 H(+). Its pathway is protein modification; peptidyl-diphthamide biosynthesis. Functionally, S-adenosyl-L-methionine-dependent methyltransferase that catalyzes the trimethylation of the amino group of the modified target histidine residue in translation elongation factor 2 (EF-2), to form an intermediate called diphthine. The three successive methylation reactions represent the second step of diphthamide biosynthesis. This is Diphthine synthase from Archaeoglobus fulgidus (strain ATCC 49558 / DSM 4304 / JCM 9628 / NBRC 100126 / VC-16).